Reading from the N-terminus, the 119-residue chain is Large ribosomal subunit protein bL20 (119 aa).

This sequence belongs to the bacterial ribosomal protein bL20 family.

Binds directly to 23S ribosomal RNA and is necessary for the in vitro assembly process of the 50S ribosomal subunit. It is not involved in the protein synthesizing functions of that subunit. The chain is Large ribosomal subunit protein bL20 from Azorhizobium caulinodans (strain ATCC 43989 / DSM 5975 / JCM 20966 / LMG 6465 / NBRC 14845 / NCIMB 13405 / ORS 571).